Reading from the N-terminus, the 498-residue chain is UDP-N-acetylmuramate--L-alanine ligase (498 aa).

122 to 128 contributes to the ATP binding site; sequence GTHGKTS.

This sequence belongs to the MurCDEF family.

Its subcellular location is the cytoplasm. The enzyme catalyses UDP-N-acetyl-alpha-D-muramate + L-alanine + ATP = UDP-N-acetyl-alpha-D-muramoyl-L-alanine + ADP + phosphate + H(+). The protein operates within cell wall biogenesis; peptidoglycan biosynthesis. Cell wall formation. In Corynebacterium jeikeium (strain K411), this protein is UDP-N-acetylmuramate--L-alanine ligase.